Consider the following 209-residue polypeptide: Thymidine kinase (209 aa).

ATP-binding positions include 9-16 (SAMNAGKT) and 88-91 (DEAQ). Glu89 functions as the Proton acceptor in the catalytic mechanism.

It belongs to the thymidine kinase family. In terms of assembly, homotetramer.

It is found in the cytoplasm. The enzyme catalyses thymidine + ATP = dTMP + ADP + H(+). This is Thymidine kinase from Xanthomonas oryzae pv. oryzae (strain MAFF 311018).